Consider the following 311-residue polypeptide: Coproporphyrin III ferrochelatase 1 (311 aa).

Residues tyrosine 12, arginine 29, 45 to 46, serine 53, and tyrosine 124 each bind Fe-coproporphyrin III; that span reads RY. Fe(2+) is bound by residues histidine 182 and glutamate 263.

The protein belongs to the ferrochelatase family.

The protein localises to the cytoplasm. The catalysed reaction is Fe-coproporphyrin III + 2 H(+) = coproporphyrin III + Fe(2+). It functions in the pathway porphyrin-containing compound metabolism; protoheme biosynthesis. Functionally, involved in coproporphyrin-dependent heme b biosynthesis. Catalyzes the insertion of ferrous iron into coproporphyrin III to form Fe-coproporphyrin III. In Bacillus cereus (strain ZK / E33L), this protein is Coproporphyrin III ferrochelatase 1.